Here is a 324-residue protein sequence, read N- to C-terminus: Ribosomal large subunit pseudouridine synthase D (324 aa).

The S4 RNA-binding domain maps to 17–90 (QRLDQALAEL…LPLNIVYEDD (74 aa)). The active site involves Asp-138.

This sequence belongs to the pseudouridine synthase RluA family.

The protein localises to the cytoplasm. It catalyses the reaction uridine(1911/1915/1917) in 23S rRNA = pseudouridine(1911/1915/1917) in 23S rRNA. In terms of biological role, responsible for synthesis of pseudouridine from uracil at positions 1911, 1915 and 1917 in 23S ribosomal RNA. In Pasteurella multocida (strain Pm70), this protein is Ribosomal large subunit pseudouridine synthase D (rluD).